The chain runs to 495 residues: Cobyric acid synthase (495 aa).

The region spanning 253–446 (KISIAIVYFP…FHGIFDGSAF (194 aa)) is the GATase cobBQ-type domain. C334 functions as the Nucleophile in the catalytic mechanism. Residue H438 is part of the active site.

The protein belongs to the CobB/CobQ family. CobQ subfamily.

Its pathway is cofactor biosynthesis; adenosylcobalamin biosynthesis. In terms of biological role, catalyzes amidations at positions B, D, E, and G on adenosylcobyrinic A,C-diamide. NH(2) groups are provided by glutamine, and one molecule of ATP is hydrogenolyzed for each amidation. This is Cobyric acid synthase from Chlorobium phaeobacteroides (strain BS1).